The sequence spans 276 residues: Small ribosomal subunit protein uS3 (276 aa).

A KH type-2 domain is found at 43–111 (IRQLMSTGME…QVQLNILEVK (69 aa)). Over residues 218–227 (AQAASAPSRG) the composition is skewed to low complexity. The segment at 218-276 (AQAASAPSRGPRSDRGGRPGGADRGDRRRRNDRPAADAAPAAEAPAVEAAPAAAEGGQA) is disordered. Over residues 228-243 (PRSDRGGRPGGADRGD) the composition is skewed to basic and acidic residues. A compositionally biased stretch (low complexity) spans 253–276 (ADAAPAAEAPAVEAAPAAAEGGQA).

It belongs to the universal ribosomal protein uS3 family. As to quaternary structure, part of the 30S ribosomal subunit. Forms a tight complex with proteins S10 and S14.

Functionally, binds the lower part of the 30S subunit head. Binds mRNA in the 70S ribosome, positioning it for translation. The sequence is that of Small ribosomal subunit protein uS3 from Pseudarthrobacter chlorophenolicus (strain ATCC 700700 / DSM 12829 / CIP 107037 / JCM 12360 / KCTC 9906 / NCIMB 13794 / A6) (Arthrobacter chlorophenolicus).